Here is a 168-residue protein sequence, read N- to C-terminus: UPF0134 protein MPN_524 (168 aa).

It belongs to the UPF0134 family.

The polypeptide is UPF0134 protein MPN_524 (Mycoplasma pneumoniae (strain ATCC 29342 / M129 / Subtype 1) (Mycoplasmoides pneumoniae)).